The chain runs to 393 residues: Acetylornithine aminotransferase (393 aa).

Residues 100–101 (GA) and Phe-133 each bind pyridoxal 5'-phosphate. Arg-136 is a N(2)-acetyl-L-ornithine binding site. 218–221 (DEVQ) lines the pyridoxal 5'-phosphate pocket. Residue Lys-247 is modified to N6-(pyridoxal phosphate)lysine. A N(2)-acetyl-L-ornithine-binding site is contributed by Ser-274. A pyridoxal 5'-phosphate-binding site is contributed by Thr-275.

This sequence belongs to the class-III pyridoxal-phosphate-dependent aminotransferase family. ArgD subfamily. As to quaternary structure, homodimer. Pyridoxal 5'-phosphate is required as a cofactor.

Its subcellular location is the cytoplasm. The enzyme catalyses N(2)-acetyl-L-ornithine + 2-oxoglutarate = N-acetyl-L-glutamate 5-semialdehyde + L-glutamate. It participates in amino-acid biosynthesis; L-arginine biosynthesis; N(2)-acetyl-L-ornithine from L-glutamate: step 4/4. This Caldanaerobacter subterraneus subsp. tengcongensis (strain DSM 15242 / JCM 11007 / NBRC 100824 / MB4) (Thermoanaerobacter tengcongensis) protein is Acetylornithine aminotransferase.